Consider the following 185-residue polypeptide: Ribosome-recycling factor (185 aa).

This sequence belongs to the RRF family.

It localises to the cytoplasm. Functionally, responsible for the release of ribosomes from messenger RNA at the termination of protein biosynthesis. May increase the efficiency of translation by recycling ribosomes from one round of translation to another. This chain is Ribosome-recycling factor, found in Campylobacter jejuni subsp. jejuni serotype O:23/36 (strain 81-176).